Reading from the N-terminus, the 29-residue chain is Potassium channel toxin alpha-KTx 3.15 (29 aa).

Residues Cys-8 and Cys-27 are joined by a disulfide bond.

Belongs to the short scorpion toxin superfamily. Potassium channel inhibitor family. Alpha-KTx 03 subfamily. In terms of tissue distribution, expressed by the venom gland.

It is found in the secreted. Functionally, may play a role in blocking voltage-gated potassium channels Kv1.1/KCNA1, Kv1.3/KCNA3 and Kv1.6/KCNA6. The chain is Potassium channel toxin alpha-KTx 3.15 from Mesobuthus gibbosus (Mediterranean checkered scorpion).